A 252-amino-acid polypeptide reads, in one-letter code: MANLGCWMLFLFVATWSDLGLCKKRPKPGGWNTGGSRYPGQGSPGGNRYPPQGGGWGQPHGGGWGQPHGGGWGQPHGGGWGQPHGGGWGQGGGTHSQWNKPSKPKTNMKHVAGAAAAGAVVGGLGGYMLGSAMSRPLIHFGNDYEDRYYRENMYRYPNQVYYRPVDQYNNQNNFVHDCVNITIKQHTVTTTTKGENFTETDVKMMERVVEQMCITQYEKESQAYYQRGSSMVLFSSPPVILLISFLIFLIVG.

A signal peptide spans 1–22 (MANLGCWMLFLFVATWSDLGLC). The interaction with ADGRG6 stretch occupies residues 23 to 38 (KKRPKPGGWNTGGSRY). The interval 23-229 (KKRPKPGGWN…ESQAYYQRGS (207 aa)) is interaction with GRB2, ERI3 and SYN1. The interval 26-106 (PKPGGWNTGG…QWNKPSKPKT (81 aa)) is disordered. Tandem repeats lie at residues 51-58 (PQGGGWGQ), 59-66 (PHGGGWGQ), 67-74 (PHGGGWGQ), 75-82 (PHGGGWGQ), and 83-90 (PHGGGWGQ). Residues 51-90 (PQGGGWGQPHGGGWGQPHGGGWGQPHGGGWGQPHGGGWGQ) are 5 X 8 AA tandem repeats of P-H-G-G-G-W-G-Q. The segment covering 52 to 94 (QGGGWGQPHGGGWGQPHGGGWGQPHGGGWGQPHGGGWGQGGGT) has biased composition (gly residues). Residues H60, G61, G62, H68, G69, G70, H76, G77, G78, H84, G85, and G86 each contribute to the Cu(2+) site. C178 and C213 form a disulfide bridge. N-linked (GlcNAc...) asparagine glycosylation is found at N180 and N196. The GPI-anchor amidated serine moiety is linked to residue S229. A propeptide spans 230-252 (SMVLFSSPPVILLISFLIFLIVG) (removed in mature form).

This sequence belongs to the prion family. As to quaternary structure, monomer and homodimer. Has a tendency to aggregate into amyloid fibrils containing a cross-beta spine, formed by a steric zipper of superposed beta-strands. Soluble oligomers may represent an intermediate stage on the path to fibril formation. Copper binding may promote oligomerization. Interacts with GRB2, APP, ERI3/PRNPIP and SYN1. Mislocalized cytosolically exposed PrP interacts with MGRN1; this interaction alters MGRN1 subcellular location and causes lysosomal enlargement. Interacts with APP. Interacts with KIAA1191. Interacts with ADGRG6.

Its subcellular location is the cell membrane. The protein resides in the golgi apparatus. Functionally, its primary physiological function is unclear. May play a role in neuronal development and synaptic plasticity. May be required for neuronal myelin sheath maintenance. May promote myelin homeostasis through acting as an agonist for ADGRG6 receptor. May play a role in iron uptake and iron homeostasis. Soluble oligomers are toxic to cultured neuroblastoma cells and induce apoptosis (in vitro). Association with GPC1 (via its heparan sulfate chains) targets PRNP to lipid rafts. Also provides Cu(2+) or Zn(2+) for the ascorbate-mediated GPC1 deaminase degradation of its heparan sulfate side chains. The protein is Major prion protein (PRNP) of Callithrix jacchus (White-tufted-ear marmoset).